Reading from the N-terminus, the 501-residue chain is Pentatricopeptide repeat-containing protein At2g36730 (501 aa).

PPR repeat units follow at residues 77–111 (TPST…GIKP), 112–146 (NKLT…GFDF), 147–177 (DVYV…MTER), 178–212 (NVVS…RFCP), 213–243 (DETT…VREL), 246–276 (NCRL…MVDK), 277–312 (NVWT…SVRP), 313–343 (NYVT…MEKI), and 349–379 (MMIH…MPFE). The interval 384–462 (VWRTLLSACS…IAGESCLELG (79 aa)) is type E motif. Residues 463 to 493 (GSFHRFFSGYDPRSEYVSIYELLDLFKFQLT) form a type E(+) motif region.

It belongs to the PPR family. PCMP-E subfamily.

In Arabidopsis thaliana (Mouse-ear cress), this protein is Pentatricopeptide repeat-containing protein At2g36730 (PCMP-E44).